Consider the following 156-residue polypeptide: Lipoprotein signal peptidase (156 aa).

The next 2 membrane-spanning stretches (helical) occupy residues 57-77 (LFLISITMVAILLMMFYLFIN) and 83-103 (ILKISLSLIISGAIGNLIDRI). Residues D110 and D129 contribute to the active site. A helical membrane pass occupies residues 124–144 (IFNIADVLVSLGTILLIIFII).

Belongs to the peptidase A8 family.

The protein resides in the cell membrane. The enzyme catalyses Release of signal peptides from bacterial membrane prolipoproteins. Hydrolyzes -Xaa-Yaa-Zaa-|-(S,diacylglyceryl)Cys-, in which Xaa is hydrophobic (preferably Leu), and Yaa (Ala or Ser) and Zaa (Gly or Ala) have small, neutral side chains.. The protein operates within protein modification; lipoprotein biosynthesis (signal peptide cleavage). This protein specifically catalyzes the removal of signal peptides from prolipoproteins. The protein is Lipoprotein signal peptidase of Clostridium tetani (strain Massachusetts / E88).